Consider the following 34-residue polypeptide: uncharacterized protein (34 aa).

The interval 1–34 is disordered; it reads MRLRRLFKQPSTRVLGVTNCPRQQGHQKRREQPD. A compositionally biased stretch (basic residues) spans 25-34; sequence GHQKRREQPD.

This is an uncharacterized protein from Schizosaccharomyces pombe (strain 972 / ATCC 24843) (Fission yeast).